We begin with the raw amino-acid sequence, 163 residues long: NADH-quinone oxidoreductase subunit I (163 aa).

4Fe-4S ferredoxin-type domains lie at 53–83 and 94–123; these read LRRY…IEAG and VRYD…EGPN. The [4Fe-4S] cluster site is built by cysteine 63, cysteine 66, cysteine 69, cysteine 73, cysteine 103, cysteine 106, cysteine 109, and cysteine 113.

Belongs to the complex I 23 kDa subunit family. In terms of assembly, NDH-1 is composed of 14 different subunits. Subunits NuoA, H, J, K, L, M, N constitute the membrane sector of the complex. The cofactor is [4Fe-4S] cluster.

The protein resides in the cell inner membrane. It carries out the reaction a quinone + NADH + 5 H(+)(in) = a quinol + NAD(+) + 4 H(+)(out). Its function is as follows. NDH-1 shuttles electrons from NADH, via FMN and iron-sulfur (Fe-S) centers, to quinones in the respiratory chain. The immediate electron acceptor for the enzyme in this species is believed to be ubiquinone. Couples the redox reaction to proton translocation (for every two electrons transferred, four hydrogen ions are translocated across the cytoplasmic membrane), and thus conserves the redox energy in a proton gradient. This chain is NADH-quinone oxidoreductase subunit I, found in Brucella suis (strain ATCC 23445 / NCTC 10510).